Reading from the N-terminus, the 367-residue chain is MFYWLIELSNTFPGFGAFRTFLNVFRYITFRTGGAVVTGALFVFLFGPWIIDHLRIRQGKGQPIRTDGPQSHLAKKGTPTMGGLMILSGLTVGTVLWANPLNPYVWIVLAVTLGFGFVGFYDDYLKVTKQTTTGFGSKLRLLIEAAIALVACYALVRLNRDPASTALTIPFLKDTVLHFGWFFVVFGAFVIVGAGNAVNLTDGLDGLAIVPVMIATASFAMIAYLAGNAVFADYLQIKYVAGTGELAVLCGALLGAGLGFLWFNAPPASIFMGDTGSLALGGMLGAIAVAVKHEIVLAVIGGLFVLEAVSVIVQVVSFKLTGKRIFRMAPIHHHFEQLGWTEPQIVIRFWIISVMLALAGLSTLKLR.

Helical transmembrane passes span 34–54, 78–98, 101–121, 135–155, 175–195, 206–226, 246–266, 270–290, 295–315, and 344–364; these read GAVV…IDHL, TPTM…VLWA, LNPY…VGFY, FGSK…CYAL, TVLH…VGAG, GLAI…AYLA, LAVL…FNAP, IFMG…IAVA, IVLA…IVQV, and QIVI…LSTL.

It belongs to the glycosyltransferase 4 family. MraY subfamily. Mg(2+) is required as a cofactor.

Its subcellular location is the cell inner membrane. The enzyme catalyses UDP-N-acetyl-alpha-D-muramoyl-L-alanyl-gamma-D-glutamyl-meso-2,6-diaminopimeloyl-D-alanyl-D-alanine + di-trans,octa-cis-undecaprenyl phosphate = di-trans,octa-cis-undecaprenyl diphospho-N-acetyl-alpha-D-muramoyl-L-alanyl-D-glutamyl-meso-2,6-diaminopimeloyl-D-alanyl-D-alanine + UMP. Its pathway is cell wall biogenesis; peptidoglycan biosynthesis. Its function is as follows. Catalyzes the initial step of the lipid cycle reactions in the biosynthesis of the cell wall peptidoglycan: transfers peptidoglycan precursor phospho-MurNAc-pentapeptide from UDP-MurNAc-pentapeptide onto the lipid carrier undecaprenyl phosphate, yielding undecaprenyl-pyrophosphoryl-MurNAc-pentapeptide, known as lipid I. This Bradyrhizobium diazoefficiens (strain JCM 10833 / BCRC 13528 / IAM 13628 / NBRC 14792 / USDA 110) protein is Phospho-N-acetylmuramoyl-pentapeptide-transferase.